The primary structure comprises 211 residues: MTSPVLQTVALACERDLRLLFDNLELRLASGDMVQISGPNGSGKTSLLRLLAGLMQPTDGQVLLNGKPLGEQRSELARNLLWIGHAAGIKDLLTPEENLTWLCALHQPAERDAIWQALAAVGLRGFEDVPCHSLSAGQQRRVALARLYLDSPPLWILDEPFTALDKQGVAQLEEHLAGHCERGGLVVLTTHHTLSRMPAGYRDIDLGNWAV.

One can recognise an ABC transporter domain in the interval 6–211 (LQTVALACER…RDIDLGNWAV (206 aa)). An ATP-binding site is contributed by 38-45 (GPNGSGKT).

Belongs to the ABC transporter superfamily. CcmA exporter (TC 3.A.1.107) family. As to quaternary structure, the complex is composed of two ATP-binding proteins (CcmA) and two transmembrane proteins (CcmB).

It is found in the cell inner membrane. It carries out the reaction heme b(in) + ATP + H2O = heme b(out) + ADP + phosphate + H(+). Functionally, part of the ABC transporter complex CcmAB involved in the biogenesis of c-type cytochromes; once thought to export heme, this seems not to be the case, but its exact role is uncertain. Responsible for energy coupling to the transport system. The sequence is that of Cytochrome c biogenesis ATP-binding export protein CcmA from Pseudomonas fluorescens (strain Pf0-1).